We begin with the raw amino-acid sequence, 404 residues long: uncharacterized protein (404 aa).

Helical transmembrane passes span 16–36 (FAFF…QPLM), 49–69 (AASL…LVFG), 79–99 (PIMG…AFSP), 110–130 (IQGV…GEEI), 133–153 (GSLG…AVFG), 166–186 (WHMA…IFFI), 221–241 (FLIG…IVYV), 252–272 (AFSS…SFIG), 283–303 (ILVM…NNML), 307–327 (ILGI…ASSW), 342–362 (LYLF…GLFW), and 364–384 (GFHW…ALWL).

Belongs to the major facilitator superfamily.

It localises to the cell membrane. This is an uncharacterized protein from Bacillus subtilis (strain 168).